A 74-amino-acid polypeptide reads, in one-letter code: uncharacterized protein (74 aa).

2 consecutive transmembrane segments (helical) span residues 3 to 23 (YSAL…CFSF) and 35 to 55 (ILFF…MLLT).

The protein resides in the cell membrane. This is an uncharacterized protein from Mycoplasma genitalium (strain ATCC 33530 / DSM 19775 / NCTC 10195 / G37) (Mycoplasmoides genitalium).